Here is a 150-residue protein sequence, read N- to C-terminus: Deoxyuridine 5'-triphosphate nucleotidohydrolase (150 aa).

Substrate is bound by residues 69–71, Asn82, 86–88, and Lys96; these read RSG and LID.

It belongs to the dUTPase family. Requires Mg(2+) as cofactor.

The catalysed reaction is dUTP + H2O = dUMP + diphosphate + H(+). It functions in the pathway pyrimidine metabolism; dUMP biosynthesis; dUMP from dCTP (dUTP route): step 2/2. Its function is as follows. This enzyme is involved in nucleotide metabolism: it produces dUMP, the immediate precursor of thymidine nucleotides and it decreases the intracellular concentration of dUTP so that uracil cannot be incorporated into DNA. The protein is Deoxyuridine 5'-triphosphate nucleotidohydrolase of Neisseria meningitidis serogroup B (strain ATCC BAA-335 / MC58).